Consider the following 275-residue polypeptide: Large ribosomal subunit protein uL2c (275 aa).

Residues 225 to 275 form a disordered region; that stretch reads MNPCDHPHGGGEGRSPIGRPRPVSPWGKPALGQRTRKGHKYSDQMILRRRK.

Belongs to the universal ribosomal protein uL2 family. As to quaternary structure, part of the 50S ribosomal subunit.

It localises to the plastid. It is found in the chloroplast. The chain is Large ribosomal subunit protein uL2c (rpl2) from Oltmannsiellopsis viridis (Marine flagellate).